The sequence spans 97 residues: Glutamyl-tRNA(Gln) amidotransferase subunit C (97 aa).

It belongs to the GatC family. Heterotrimer of A, B and C subunits.

The catalysed reaction is L-glutamyl-tRNA(Gln) + L-glutamine + ATP + H2O = L-glutaminyl-tRNA(Gln) + L-glutamate + ADP + phosphate + H(+). It carries out the reaction L-aspartyl-tRNA(Asn) + L-glutamine + ATP + H2O = L-asparaginyl-tRNA(Asn) + L-glutamate + ADP + phosphate + 2 H(+). Allows the formation of correctly charged Asn-tRNA(Asn) or Gln-tRNA(Gln) through the transamidation of misacylated Asp-tRNA(Asn) or Glu-tRNA(Gln) in organisms which lack either or both of asparaginyl-tRNA or glutaminyl-tRNA synthetases. The reaction takes place in the presence of glutamine and ATP through an activated phospho-Asp-tRNA(Asn) or phospho-Glu-tRNA(Gln). This is Glutamyl-tRNA(Gln) amidotransferase subunit C from Sulfurisphaera tokodaii (strain DSM 16993 / JCM 10545 / NBRC 100140 / 7) (Sulfolobus tokodaii).